We begin with the raw amino-acid sequence, 321 residues long: CPX chromosomal region candidate gene 1 protein homolog (321 aa).

The interval 1–83 (MSSPTKEGSD…TEIQKDQREE (83 aa)) is disordered. Polar residues-rich tracts occupy residues 21–32 (NEPSNDCTTDIE) and 44–60 (VETN…TSQE).

The chain is CPX chromosomal region candidate gene 1 protein homolog (CPXCR1) from Macaca fascicularis (Crab-eating macaque).